Here is a 227-residue protein sequence, read N- to C-terminus: Ribose-5-phosphate isomerase A (227 aa).

Residues 26–29 (TGST), 82–85 (DGAD), and 95–98 (KGGG) contribute to the substrate site. E104 (proton acceptor) is an active-site residue. K122 is a substrate binding site.

The protein belongs to the ribose 5-phosphate isomerase family. Homodimer.

The enzyme catalyses aldehydo-D-ribose 5-phosphate = D-ribulose 5-phosphate. The protein operates within carbohydrate degradation; pentose phosphate pathway; D-ribose 5-phosphate from D-ribulose 5-phosphate (non-oxidative stage): step 1/1. Its function is as follows. Catalyzes the reversible conversion of ribose-5-phosphate to ribulose 5-phosphate. The sequence is that of Ribose-5-phosphate isomerase A from Streptococcus pyogenes serotype M1.